The chain runs to 163 residues: N5-carboxyaminoimidazole ribonucleotide mutase (163 aa).

Substrate is bound by residues Ser-11, Asp-14, and Arg-41.

Belongs to the AIR carboxylase family. Class I subfamily.

It carries out the reaction 5-carboxyamino-1-(5-phospho-D-ribosyl)imidazole + H(+) = 5-amino-1-(5-phospho-D-ribosyl)imidazole-4-carboxylate. It participates in purine metabolism; IMP biosynthesis via de novo pathway; 5-amino-1-(5-phospho-D-ribosyl)imidazole-4-carboxylate from 5-amino-1-(5-phospho-D-ribosyl)imidazole (N5-CAIR route): step 2/2. In terms of biological role, catalyzes the conversion of N5-carboxyaminoimidazole ribonucleotide (N5-CAIR) to 4-carboxy-5-aminoimidazole ribonucleotide (CAIR). In Pseudomonas aeruginosa (strain ATCC 15692 / DSM 22644 / CIP 104116 / JCM 14847 / LMG 12228 / 1C / PRS 101 / PAO1), this protein is N5-carboxyaminoimidazole ribonucleotide mutase.